The following is a 709-amino-acid chain: Glycerol kinase (709 aa).

Position 56 (T56) interacts with substrate. Residue R60 participates in ATP binding. Residues K86–K110 form a disordered region. Residues R201, Y258, and D386 each contribute to the substrate site. ATP contacts are provided by residues T408, G463, and G584–S588.

Belongs to the FGGY kinase family.

It catalyses the reaction glycerol + ATP = sn-glycerol 3-phosphate + ADP + H(+). It functions in the pathway polyol metabolism; glycerol degradation via glycerol kinase pathway; sn-glycerol 3-phosphate from glycerol: step 1/1. Functionally, key enzyme in the regulation of glycerol uptake and metabolism. Catalyzes the phosphorylation of glycerol to yield sn-glycerol 3-phosphate. The protein is Glycerol kinase (GUT1) of Saccharomyces cerevisiae (strain ATCC 204508 / S288c) (Baker's yeast).